The primary structure comprises 211 residues: 5-formyltetrahydrofolate cyclo-ligase (211 aa).

4-8 is a binding site for ATP; sequence KQLLR. Substrate contacts are provided by residues Glu-56 and 152 to 156; that span reads HGAGY. ATP-binding positions include 151–158 and Asp-194; that span reads GHGAGYYD.

This sequence belongs to the 5-formyltetrahydrofolate cyclo-ligase family. N-glycosylated.

The protein resides in the mitochondrion. It catalyses the reaction (6S)-5-formyl-5,6,7,8-tetrahydrofolate + ATP = (6R)-5,10-methenyltetrahydrofolate + ADP + phosphate. Functionally, only enzyme known to utilize 5-formyltetrahydrofolate (folinic acid) as substrate. Contributes to tetrahydrofolate metabolism in an alternative way of folate biosynthesis. May regulate carbon flow through the folate-dependent one-carbon metabolic network that supplies carbon for the biosynthesis of purines, thymidine and amino acids. The protein is 5-formyltetrahydrofolate cyclo-ligase (FAU1) of Saccharomyces cerevisiae (strain ATCC 204508 / S288c) (Baker's yeast).